Here is a 551-residue protein sequence, read N- to C-terminus: Chaperonin GroEL (551 aa).

Residues Thr30–Pro33, Lys51, Asp87–Thr91, Gly415, Asn478–Ala480, and Asp494 each bind ATP.

The protein belongs to the chaperonin (HSP60) family. In terms of assembly, forms a cylinder of 14 subunits composed of two heptameric rings stacked back-to-back. Interacts with the co-chaperonin GroES.

Its subcellular location is the cytoplasm. The enzyme catalyses ATP + H2O + a folded polypeptide = ADP + phosphate + an unfolded polypeptide.. Functionally, together with its co-chaperonin GroES, plays an essential role in assisting protein folding. The GroEL-GroES system forms a nano-cage that allows encapsulation of the non-native substrate proteins and provides a physical environment optimized to promote and accelerate protein folding. The sequence is that of Chaperonin GroEL from Syntrophotalea carbinolica (strain DSM 2380 / NBRC 103641 / GraBd1) (Pelobacter carbinolicus).